Reading from the N-terminus, the 170-residue chain is Microfibrillar-associated protein 5 (170 aa).

Positions 1 to 20 (MTFFGPKVLLLLTALIMSSG) are cleaved as a signal peptide. Positions 30–32 (RGD) match the Cell attachment site motif. Asparagine 76 carries an N-linked (GlcNAc...) asparagine glycan.

This sequence belongs to the MFAP family. Interacts with TGFB2. Interacts with BMP2. Interacts with FBN1 (via N-terminal domain) and FBN2. Post-translationally, forms intermolecular disulfide bonds either with other MAGP-2 molecules or with other components of the microfibrils. Associated with fibrillin-containing microfibrils of the developing nuchal ligament.

Its subcellular location is the secreted. It is found in the extracellular space. The protein resides in the extracellular matrix. Functionally, may play a role in hematopoiesis. In the cardiovascular system, could regulate growth factors or participate in cell signaling in maintaining large vessel integrity. Component of the elastin-associated microfibrils. The sequence is that of Microfibrillar-associated protein 5 (MFAP5) from Bos taurus (Bovine).